A 51-amino-acid polypeptide reads, in one-letter code: Large ribosomal subunit protein eL39 (51 aa).

It belongs to the eukaryotic ribosomal protein eL39 family.

This Thermococcus gammatolerans (strain DSM 15229 / JCM 11827 / EJ3) protein is Large ribosomal subunit protein eL39.